The sequence spans 696 residues: SLIT and NTRK-like protein 1 (696 aa).

An N-terminal signal peptide occupies residues 1 to 17 (MLLWILLLETSLCFAAG). The region spanning 18–57 (NVTGDVCKEKICSCNEIEGDLHVDCEKKGFTSLQRFTAPT) is the LRRNT 1 domain. Residues 18–622 (NVTGDVCKEK…SRVSISVLVP (605 aa)) lie on the Extracellular side of the membrane. LRR repeat units lie at residues 59 to 80 (QFYH…EFAN), 83 to 104 (NAVS…AFLG), 106 to 128 (QLVK…TFLG), 131 to 152 (DLEY…AFQD), 155 to 176 (KLEV…VFQY), and 178 to 199 (PITH…EVLE). The region spanning 212-263 (NPWDCTCDLLSLKEWLENIPKNALIGRVVCEAPTRLQGKDLNETTEQDLCPL) is the LRRCT 1 domain. The segment at 265–314 (NRVDSSLPAPPAQEETFAPGPLPTPFKTNGQEDHATPGSAPNGGTKIPGN) is disordered. The LRRNT 2 domain maps to 332-373 (NKPLANSLPCPGGCSCDHIPGSGLKMNCNNRNVSSLADLKPK). LRR repeat units lie at residues 376 to 397 (NVQE…HFVD), 400 to 421 (NLIL…TFKN), 424 to 445 (DLRW…KFAG), 448 to 469 (NLEY…TFNA), 472 to 493 (KLRI…VFAG), and 495 to 516 (SLSK…GVLD). Residues 529 to 580 (NPWECSCTIVPFKQWAERLGSEVLMSDLKCETPVNFFRKDFMLLSNDEICPQ) form the LRRCT 2 domain. A helical transmembrane segment spans residues 623 to 643 (GLLLVFVTSAFTVVGMLVFIL). The Cytoplasmic portion of the chain corresponds to 644-696 (RNRKRSKRRDANSSASEINSLQTVCDSSYWHNGPYNADGAHRVYDCGSHSLSD). Position 695 is a phosphoserine; by CK2 (Ser-695).

Belongs to the SLITRK family. As to quaternary structure, can form homodimers; homodimerization requires repeat LRR 2. Interacts with YWHAB, YWHAE, YWHAG, YWHAH, SFN, YWHAQ and YWHAZ. Post-translationally, undergoes proteolytic cleavage that results in shedding of the ectodomain and cleavage of the C-terminal cytoplasmic tail. Glycosylated. Phosphorylation at Ser-695 is necessary for proper function in promoting neurite outgrowth. Expressed predominantly in the frontal lobe of the cerebral cortex of the brain. Also expressed in some astrocytic brain tumors such as astrocytomas, oligodendrogliomas, glioblastomas, gangliogliomas and primitive neuroectodermal tumors.

The protein localises to the membrane. It localises to the secreted. The protein resides in the synapse. In terms of biological role, it is involved in synaptogenesis and promotes excitatory synapse differentiation. Enhances neuronal dendrite outgrowth. This is SLIT and NTRK-like protein 1 (SLITRK1) from Homo sapiens (Human).